A 229-amino-acid polypeptide reads, in one-letter code: Heptaprenylglyceryl phosphate synthase (229 aa).

Residues aspartate 13 and threonine 39 each contribute to the Mg(2+) site.

Belongs to the GGGP/HepGP synthase family. As to quaternary structure, homodimer. Mg(2+) serves as cofactor.

It catalyses the reaction sn-glycerol 1-phosphate + all-trans-heptaprenyl diphosphate = 3-heptaprenyl-sn-glycero-1-phosphate + diphosphate. Its pathway is membrane lipid metabolism; glycerophospholipid metabolism. Prenyltransferase that catalyzes in vivo the transfer of the heptaprenyl moiety of heptaprenyl pyrophosphate (HepPP; 35 carbon atoms) to the C3 hydroxyl of sn-glycerol-1-phosphate (G1P), producing heptaprenylglyceryl phosphate (HepGP). This reaction is an ether-bond-formation step in the biosynthesis of archaea-type G1P-based membrane lipids found in Bacillales. The sequence is that of Heptaprenylglyceryl phosphate synthase from Lysinibacillus sphaericus (strain C3-41).